The following is a 523-amino-acid chain: NAD(P)H-quinone oxidoreductase subunit 2 (523 aa).

Helical transmembrane passes span 29-49 (AVLPEGAVLLAMIATLLVDLA), 57-77 (WVPPICYIGLGSALVLLALQW), 94-114 (LAVAFRAVIATSTLLSLLISW), 132-152 (LAATLGAMLLCGATDLVSIFI), 182-202 (LLVGSAAAAVFLYGASLLYGL), 221-241 (PIAALSLVFVLATVAFKIAAV), 255-275 (PTPVVAFLSVGSKAAGFALAL), 291-311 (LLFTVLAVLSMTLGNVVALAQ), 317-337 (MLAYSSIGQAGFVMIGMVCGT), 345-365 (VLYMAAYLFMNLGAFACIILF), 389-409 (LGLSLCLLSLGGIPPMLGFFG), 424-444 (LLVVVGLITSVISIYYYISVI), and 477-497 (VALIGCVGVTAIGGILSNPLF).

It belongs to the complex I subunit 2 family. NDH-1 can be composed of about 15 different subunits; different subcomplexes with different compositions have been identified which probably have different functions.

It is found in the cellular thylakoid membrane. The catalysed reaction is a plastoquinone + NADH + (n+1) H(+)(in) = a plastoquinol + NAD(+) + n H(+)(out). It carries out the reaction a plastoquinone + NADPH + (n+1) H(+)(in) = a plastoquinol + NADP(+) + n H(+)(out). Its function is as follows. NDH-1 shuttles electrons from an unknown electron donor, via FMN and iron-sulfur (Fe-S) centers, to quinones in the respiratory and/or the photosynthetic chain. The immediate electron acceptor for the enzyme in this species is believed to be plastoquinone. Couples the redox reaction to proton translocation, and thus conserves the redox energy in a proton gradient. Cyanobacterial NDH-1 also plays a role in inorganic carbon-concentration. This chain is NAD(P)H-quinone oxidoreductase subunit 2, found in Synechococcus sp. (strain CC9902).